A 466-amino-acid chain; its full sequence is RuvB-like helicase 2 (466 aa).

74-81 (GPPSTGKT) contacts ATP.

The protein belongs to the RuvB family. In terms of assembly, may form heterododecamers with RVB1. Component of the SWR1 chromatin remodeling complex, the INO80 chromatin remodeling complex, and of the R2TP complex.

Its subcellular location is the nucleus. It carries out the reaction ATP + H2O = ADP + phosphate + H(+). Functionally, DNA helicase which participates in several chromatin remodeling complexes, including the SWR1 and the INO80 complexes. The SWR1 complex mediates the ATP-dependent exchange of histone H2A for the H2A variant HZT1 leading to transcriptional regulation of selected genes by chromatin remodeling. The INO80 complex remodels chromatin by shifting nucleosomes and is involved in DNA repair. Also involved in pre-rRNA processing. This chain is RuvB-like helicase 2 (RVB2), found in Yarrowia lipolytica (strain CLIB 122 / E 150) (Yeast).